A 500-amino-acid polypeptide reads, in one-letter code: NAD(P)H-quinone oxidoreductase chain 4, chloroplastic (500 aa).

14 consecutive transmembrane segments (helical) span residues 4 to 24, 35 to 55, 87 to 107, 111 to 131, 134 to 154, 167 to 187, 211 to 231, 242 to 262, 274 to 294, 313 to 333, 334 to 354, 386 to 406, 417 to 437, and 462 to 482; these read FPWL…IFFL, YTIA…CYHF, LGSI…AWPV, SQLF…LFSS, LLLF…LLSM, FILY…GMGL, ILLY…IPLH, HYST…YGLI, YLFS…AALT, MGFI…GAIL, QILS…TACD, LALP…GLIT, LITF…LSML, and LFLL…PDFV.

The protein belongs to the complex I subunit 4 family.

Its subcellular location is the plastid. The protein localises to the chloroplast thylakoid membrane. It catalyses the reaction a plastoquinone + NADH + (n+1) H(+)(in) = a plastoquinol + NAD(+) + n H(+)(out). The catalysed reaction is a plastoquinone + NADPH + (n+1) H(+)(in) = a plastoquinol + NADP(+) + n H(+)(out). The polypeptide is NAD(P)H-quinone oxidoreductase chain 4, chloroplastic (Saccharum hybrid (Sugarcane)).